The following is a 177-amino-acid chain: MSRIGKKPVSLPQGVTATVNGQTVTAKGPKGELKFVVNDEVLVKMEGSEIAVQPRDQTKTARSKWGMSRTQIVNILHGVKDGFEKKLEITGVGYRAAMQGKNLQLALGFSHDVVYETPAGVTIAVPKPTEITVTGIDKQQVGQVAAEIREYRGPEPYKGKGVRYAGEKIVRKEGKKK.

This sequence belongs to the universal ribosomal protein uL6 family. In terms of assembly, part of the 50S ribosomal subunit.

This protein binds to the 23S rRNA, and is important in its secondary structure. It is located near the subunit interface in the base of the L7/L12 stalk, and near the tRNA binding site of the peptidyltransferase center. The polypeptide is Large ribosomal subunit protein uL6 (Mesorhizobium japonicum (strain LMG 29417 / CECT 9101 / MAFF 303099) (Mesorhizobium loti (strain MAFF 303099))).